The sequence spans 365 residues: Protein dbl-1 (365 aa).

Positions 1–42 (MNDSVRTTTTISSTKSLVHSFQLSAILHLFLLISFTPMSAAA) are cleaved as a signal peptide. Residues 43 to 244 (DQHASHATRR…KRSAQTGNSE (202 aa)) constitute a propeptide that is removed on maturation. Asparagine 110, asparagine 143, and asparagine 167 each carry an N-linked (GlcNAc...) asparagine glycan. The disordered stretch occupies residues 231 to 259 (SVRRKRSAQTGNSERKNRKKGRKHHNTEA). Residues 246–255 (KNRKKGRKHH) are compositionally biased toward basic residues. Intrachain disulfides connect cysteine 264–cysteine 330, cysteine 293–cysteine 362, and cysteine 297–cysteine 364. N-linked (GlcNAc...) asparagine glycosylation is present at asparagine 306.

It belongs to the TGF-beta family. In terms of assembly, homodimer; disulfide-linked. Interacts with drag-1. In terms of tissue distribution, expressed in embryos just prior to hatching and remains constant in most cells throughout the larval and adult stages. Expressed by AVA command interneurons.

Its subcellular location is the secreted. In terms of biological role, ligand for the serine/threonine-protein kinase receptor type-1 sma-6 which activates a TGF-beta-like signaling pathway. Multifunctional protein that is involved in body size, male ectodermal patterning, innate immunity, lipid metabolism and neural plasticity. Dose-dependent regulator of body size, probably influencing the sizes of some or all cells rather than their number. Plays a role in patterning of male-specific genital sensilla (simple sense organs), known as rays, and mating-associated structures, spicules. Plays a protective role in response to infection by the Gram-negative bacterium S.marcescens, by activating expression of genes involved in innate immunity. Regulator of lipid homeostasis, acting non cell-autonomously in the hypodermis; partly dependent on the Insulin/IGF-1-like signaling (IIS) mediated pathway. Required for aversive olfactory learning of pathogenic bacteria in adults. Involved in gland cell morphology, possibly via activation of a Smad-independent TGF-beta signaling pathway. Required to oppose the autoregulation of expression of Runt-related transcription factor rnt-1. The sequence is that of Protein dbl-1 from Caenorhabditis elegans.